The primary structure comprises 329 residues: Biotin synthase (329 aa).

The region spanning 38-262 (NTIQVSTLLS…IMPYSYIRLS (225 aa)) is the Radical SAM core domain. Residues cysteine 53, cysteine 57, and cysteine 60 each coordinate [4Fe-4S] cluster. [2Fe-2S] cluster is bound by residues cysteine 97, cysteine 128, cysteine 188, and arginine 260.

Belongs to the radical SAM superfamily. Biotin synthase family. In terms of assembly, homodimer. [4Fe-4S] cluster is required as a cofactor. Requires [2Fe-2S] cluster as cofactor.

The catalysed reaction is (4R,5S)-dethiobiotin + (sulfur carrier)-SH + 2 reduced [2Fe-2S]-[ferredoxin] + 2 S-adenosyl-L-methionine = (sulfur carrier)-H + biotin + 2 5'-deoxyadenosine + 2 L-methionine + 2 oxidized [2Fe-2S]-[ferredoxin]. It participates in cofactor biosynthesis; biotin biosynthesis; biotin from 7,8-diaminononanoate: step 2/2. Its function is as follows. Catalyzes the conversion of dethiobiotin (DTB) to biotin by the insertion of a sulfur atom into dethiobiotin via a radical-based mechanism. The chain is Biotin synthase from Acinetobacter baylyi (strain ATCC 33305 / BD413 / ADP1).